We begin with the raw amino-acid sequence, 288 residues long: MWCPSVSLSIWANAWLAGKAAPDDVLDALSLWAPTQSVAAYDAVAAGHTGLPWPDVHDAGTVSLLQTLRAAVGRRRLRGTINVVLPVPGDVRGLAAGTQFEHDALAAGEAVIVANPEDPGSAVGLVPEFSYGDVDEAAQSEPLTPELCALSWMVYSLPGAPVLEHYELGDAEYALRSAVRSAAEALSTIGLGSSDVAKPRGLVEQLLESSRQHRVPDHAPSRALRVLENAAHVDAIIAVSAGLSRLPIGTQSLSDAQRATDALRPLTAVVRSARMSAVTAILHSAWPD.

This sequence to M.bovis Mb1522c, M.leprae ML1804 and M.avium MAV321.

This is an uncharacterized protein from Mycobacterium tuberculosis (strain ATCC 25618 / H37Rv).